The following is a 364-amino-acid chain: Threonine-phosphate decarboxylase (364 aa).

O-phospho-L-threonine is bound by residues 8–9, asparagine 32, and asparagine 157; that span reads HG. N6-(pyridoxal phosphate)lysine is present on lysine 216. O-phospho-L-threonine is bound by residues arginine 323 and arginine 337.

It belongs to the class-II pyridoxal-phosphate-dependent aminotransferase family. Homodimer. The cofactor is pyridoxal 5'-phosphate.

It catalyses the reaction O-phospho-L-threonine + H(+) = (R)-1-aminopropan-2-yl phosphate + CO2. It participates in cofactor biosynthesis; adenosylcobalamin biosynthesis. In terms of biological role, decarboxylates L-threonine-O-3-phosphate to yield (R)-1-amino-2-propanol O-2-phosphate, the precursor for the linkage between the nucleotide loop and the corrin ring in cobalamin. The chain is Threonine-phosphate decarboxylase (cobD) from Salmonella typhimurium (strain LT2 / SGSC1412 / ATCC 700720).